A 360-amino-acid polypeptide reads, in one-letter code: UDP-N-acetylglucosamine--N-acetylmuramyl-(pentapeptide) pyrophosphoryl-undecaprenol N-acetylglucosamine transferase (360 aa).

UDP-N-acetyl-alpha-D-glucosamine contacts are provided by residues 12 to 14 (TAG), Ser198, and Gln289.

It belongs to the glycosyltransferase 28 family. MurG subfamily.

The protein resides in the cell membrane. The catalysed reaction is Mur2Ac(oyl-L-Ala-gamma-D-Glu-L-Lys-D-Ala-D-Ala)-di-trans,octa-cis-undecaprenyl diphosphate + UDP-N-acetyl-alpha-D-glucosamine = beta-D-GlcNAc-(1-&gt;4)-Mur2Ac(oyl-L-Ala-gamma-D-Glu-L-Lys-D-Ala-D-Ala)-di-trans,octa-cis-undecaprenyl diphosphate + UDP + H(+). The protein operates within cell wall biogenesis; peptidoglycan biosynthesis. Functionally, cell wall formation. Catalyzes the transfer of a GlcNAc subunit on undecaprenyl-pyrophosphoryl-MurNAc-pentapeptide (lipid intermediate I) to form undecaprenyl-pyrophosphoryl-MurNAc-(pentapeptide)GlcNAc (lipid intermediate II). This chain is UDP-N-acetylglucosamine--N-acetylmuramyl-(pentapeptide) pyrophosphoryl-undecaprenol N-acetylglucosamine transferase, found in Streptococcus equi subsp. equi (strain 4047).